A 151-amino-acid chain; its full sequence is uncharacterized protein (151 aa).

Residues 35–147 are a coiled coil; it reads GIFENERQKL…RETLQESLED (113 aa).

This is an uncharacterized protein from Helicobacter hepaticus (strain ATCC 51449 / 3B1).